The following is a 78-amino-acid chain: Acyl carrier protein (78 aa).

In terms of domain architecture, Carrier spans 1–76 (MALFEDIQAV…DVVKYIEDNK (76 aa)). At S36 the chain carries O-(pantetheine 4'-phosphoryl)serine.

It belongs to the acyl carrier protein (ACP) family. Post-translationally, 4'-phosphopantetheine is transferred from CoA to a specific serine of apo-ACP by AcpS. This modification is essential for activity because fatty acids are bound in thioester linkage to the sulfhydryl of the prosthetic group.

It localises to the cytoplasm. Its pathway is lipid metabolism; fatty acid biosynthesis. Functionally, carrier of the growing fatty acid chain in fatty acid biosynthesis. The chain is Acyl carrier protein from Helicobacter acinonychis (strain Sheeba).